The primary structure comprises 453 residues: Bifunctional protein GlmU (453 aa).

Residues 1–226 (MAFSVVILAA…EIEVEGINNR (226 aa)) form a pyrophosphorylase region. Residues 8–11 (LAAG), K22, Q73, and 78–79 (GT) contribute to the UDP-N-acetyl-alpha-D-glucosamine site. D102 is a binding site for Mg(2+). UDP-N-acetyl-alpha-D-glucosamine is bound by residues G137, E151, N166, and N224. N224 is a Mg(2+) binding site. A linker region spans residues 227 to 247 (KQLAAIERAFQFEQAQELMMQ). The N-acetyltransferase stretch occupies residues 248–453 (GVSLLDPHRF…SGWQRPTKPE (206 aa)). UDP-N-acetyl-alpha-D-glucosamine is bound by residues R330 and K348. Residue H360 is the Proton acceptor of the active site. 2 residues coordinate UDP-N-acetyl-alpha-D-glucosamine: Y363 and N374. Acetyl-CoA is bound by residues A377, 383–384 (NY), S402, A420, and R437.

In the N-terminal section; belongs to the N-acetylglucosamine-1-phosphate uridyltransferase family. It in the C-terminal section; belongs to the transferase hexapeptide repeat family. In terms of assembly, homotrimer. Requires Mg(2+) as cofactor.

It localises to the cytoplasm. The enzyme catalyses alpha-D-glucosamine 1-phosphate + acetyl-CoA = N-acetyl-alpha-D-glucosamine 1-phosphate + CoA + H(+). The catalysed reaction is N-acetyl-alpha-D-glucosamine 1-phosphate + UTP + H(+) = UDP-N-acetyl-alpha-D-glucosamine + diphosphate. It functions in the pathway nucleotide-sugar biosynthesis; UDP-N-acetyl-alpha-D-glucosamine biosynthesis; N-acetyl-alpha-D-glucosamine 1-phosphate from alpha-D-glucosamine 6-phosphate (route II): step 2/2. The protein operates within nucleotide-sugar biosynthesis; UDP-N-acetyl-alpha-D-glucosamine biosynthesis; UDP-N-acetyl-alpha-D-glucosamine from N-acetyl-alpha-D-glucosamine 1-phosphate: step 1/1. It participates in bacterial outer membrane biogenesis; LPS lipid A biosynthesis. Its function is as follows. Catalyzes the last two sequential reactions in the de novo biosynthetic pathway for UDP-N-acetylglucosamine (UDP-GlcNAc). The C-terminal domain catalyzes the transfer of acetyl group from acetyl coenzyme A to glucosamine-1-phosphate (GlcN-1-P) to produce N-acetylglucosamine-1-phosphate (GlcNAc-1-P), which is converted into UDP-GlcNAc by the transfer of uridine 5-monophosphate (from uridine 5-triphosphate), a reaction catalyzed by the N-terminal domain. The protein is Bifunctional protein GlmU of Pseudoalteromonas atlantica (strain T6c / ATCC BAA-1087).